Consider the following 202-residue polypeptide: UPF0301 protein Meso_0753 (202 aa).

The protein belongs to the UPF0301 (AlgH) family.

The sequence is that of UPF0301 protein Meso_0753 from Chelativorans sp. (strain BNC1).